The primary structure comprises 358 residues: Trace amine-associated receptor 7h (358 aa).

Residues 1 to 47 (MATDDESFPWDQDSILSRDLLSALSPQLCYENLNRSCVRSPYSPGPR) are Extracellular-facing. N-linked (GlcNAc...) asparagine glycosylation occurs at asparagine 34. Cystine bridges form between cysteine 37-cysteine 201 and cysteine 120-cysteine 205. A helical transmembrane segment spans residues 48 to 68 (LILYAVFGFGAVLAVCGNLLV). Residues 69-83 (MTSILHFRQLHSPAN) are Cytoplasmic-facing. Residues 84–104 (FLVASLACADLLVGLTVMPFS) traverse the membrane as a helical segment. Residues 105 to 125 (MVRSVEGCWYFGDSYCKLHTS) lie on the Extracellular side of the membrane. A helical membrane pass occupies residues 126 to 143 (FDMSFCCSSLLHLCFISV). Residues 144-166 (DRYIAVSDPLIYPIRFTASVSGK) lie on the Cytoplasmic side of the membrane. A helical transmembrane segment spans residues 167–187 (CITFSWFLSIIYGFSLIYTGA). The Extracellular portion of the chain corresponds to 188–217 (SEAGLKDLVSALSCVGGCQIPMNQSCVLIN). N-linked (GlcNAc...) asparagine glycosylation is present at asparagine 210. The chain crosses the membrane as a helical span at residues 218–238 (FLLFLVPTLVMMTVYSKIFLI). Over 239-274 (AKQQAQNMEKMSKQTTRASDSYKDRVAKRERKAAKT) the chain is Cytoplasmic. The helical transmembrane segment at 275–295 (LGIAVAAFLLSWLPYLIDSII) threads the bilayer. The Extracellular segment spans residues 296–309 (DAFLGFITPSYVYE). Residues 310 to 333 (ILVWIVYYNSAMNPLIYAFFYPWF) form a helical membrane-spanning segment. The Cytoplasmic segment spans residues 334–358 (RNAIKLIVTGKILKQNSSTTNLFSE).

It belongs to the G-protein coupled receptor 1 family.

It is found in the cell membrane. Its function is as follows. Olfactory receptor specific for N,N-dimethylalkylamines trace amines. Trace amine compounds are enriched in animal body fluids and act on trace amine-associated receptors (TAARs) to elicit both intraspecific and interspecific innate behaviors. Ligand-binding causes a conformation change that triggers signaling via G(s)-class of G alpha proteins (GNAL or GNAS). The protein is Trace amine-associated receptor 7h of Rattus norvegicus (Rat).